A 340-amino-acid polypeptide reads, in one-letter code: MTENALLLLNLGSPDSTRVEDVRRYLDQFLMDPYVVDLPWPLRRLLVSLILVKRPAESAHAYSSIWWDEGSPLIVLSRRLQEAIKPHWPHGPVELAMRYGQPAIEKVLLDLARRGIRRVTLAPLYPQFADSTTTTAEQEVRRVIAAHRLELEVSTLPPFYDQPVYLDALVESVHPYLQQPHDHLLLSFHGLPERHIRKLVKDPAHDLLAESSRNVSPEALALCYRSQCLRTAEAFAERAGLEQGRWSVSFQSRLGRAKWIEPYTDAKLDELVQRGVKRLLVMCPAFVADCIETLEEIGMRGREQFISAGGEDLVLIPCLNDHPAWVGALADMSGRLARPL.

Positions 189 and 292 each coordinate Fe cation.

It belongs to the ferrochelatase family.

It is found in the cytoplasm. The catalysed reaction is heme b + 2 H(+) = protoporphyrin IX + Fe(2+). It functions in the pathway porphyrin-containing compound metabolism; protoheme biosynthesis; protoheme from protoporphyrin-IX: step 1/1. Catalyzes the ferrous insertion into protoporphyrin IX. The polypeptide is Ferrochelatase (Pseudomonas paraeruginosa (strain DSM 24068 / PA7) (Pseudomonas aeruginosa (strain PA7))).